The following is an 865-amino-acid chain: Xylosyltransferase 2 (865 aa).

At 1-15 the chain is on the cytoplasmic side; it reads MVASARVQKLVRRYK. The helical; Signal-anchor for type II membrane protein transmembrane segment at 16 to 36 threads the bilayer; that stretch reads LAIATALAILLLQGLVVWSFS. At 37–865 the chain is on the lumenal side; that stretch reads GLEEDEPGEK…GPVKADGRLR (829 aa). Residues 39 to 157 are disordered; that stretch reads EEDEPGEKGR…EGAPQPTDNG (119 aa). Positions 53 to 65 are enriched in basic and acidic residues; the sequence is RPLDPGEGSKDTD. The segment covering 73–82 has biased composition (basic residues); the sequence is SAGRRHGRWR. Residue Asn122 is glycosylated (N-linked (GlcNAc...) asparagine). A compositionally biased stretch (low complexity) spans 125–137; sequence GAAAGEALVGAAG. Disulfide bonds link Cys162–Cys190, Cys206–Cys448, Cys467–Cys480, and Cys469–Cys478. UDP-alpha-D-xylose contacts are provided by residues Val239, Asp267, and 296–298; that span reads TIW. Asn327 is a glycosylation site (N-linked (GlcNAc...) asparagine). Residue 400–401 coordinates UDP-alpha-D-xylose; the sequence is DW. Residues Ser481 and 504–505 each bind UDP-alpha-D-xylose; that span reads RK. 2 disulfides stabilise this stretch: Cys581/Cys833 and Cys826/Cys839. Residue Asn683 is glycosylated (N-linked (GlcNAc...) asparagine).

The protein belongs to the glycosyltransferase 14 family. XylT subfamily. In terms of assembly, monomer. Mg(2+) is required as a cofactor. It depends on Mn(2+) as a cofactor. Post-translationally, contains disulfide bonds.

Its subcellular location is the golgi apparatus membrane. It is found in the secreted. It catalyses the reaction UDP-alpha-D-xylose + L-seryl-[protein] = 3-O-(beta-D-xylosyl)-L-seryl-[protein] + UDP + H(+). The protein operates within glycan metabolism; chondroitin sulfate biosynthesis. It functions in the pathway glycan metabolism; heparan sulfate biosynthesis. In terms of biological role, catalyzes the first step in the biosynthesis of chondroitin sulfate, heparan sulfate and dermatan sulfate proteoglycans, such as DCN. Transfers D-xylose from UDP-D-xylose to specific serine residues of the core protein. This chain is Xylosyltransferase 2 (XYLT2), found in Canis lupus familiaris (Dog).